The following is a 346-amino-acid chain: Phosphoribosylformylglycinamidine cyclo-ligase (346 aa).

This sequence belongs to the AIR synthase family.

The protein resides in the cytoplasm. The enzyme catalyses 2-formamido-N(1)-(5-O-phospho-beta-D-ribosyl)acetamidine + ATP = 5-amino-1-(5-phospho-beta-D-ribosyl)imidazole + ADP + phosphate + H(+). The protein operates within purine metabolism; IMP biosynthesis via de novo pathway; 5-amino-1-(5-phospho-D-ribosyl)imidazole from N(2)-formyl-N(1)-(5-phospho-D-ribosyl)glycinamide: step 2/2. In Erwinia tasmaniensis (strain DSM 17950 / CFBP 7177 / CIP 109463 / NCPPB 4357 / Et1/99), this protein is Phosphoribosylformylglycinamidine cyclo-ligase.